Reading from the N-terminus, the 374-residue chain is Nudix hydrolase 20, chloroplastic (374 aa).

The N-terminal 49 residues, 1–49 (MASGFCSLALTVTTSLFSSHAITRRVLPILRWRSSSMSLSPLRHSRALS), are a transit peptide targeting the chloroplast. One can recognise a Nudix hydrolase domain in the interval 205–346 (GYGVHMNGYV…KANCSLVIID (142 aa)). The Nudix box signature appears at 244–265 (GGLPHGISCGGNLVKECEEEAG). Mg(2+) is bound by residues Glu-259 and Glu-263.

Belongs to the Nudix hydrolase family. Mg(2+) serves as cofactor. Mn(2+) is required as a cofactor. Expressed in leaves and inflorescences.

Its subcellular location is the plastid. It localises to the chloroplast. Its function is as follows. Probably mediates the hydrolysis of some nucleoside diphosphate derivatives. In Arabidopsis thaliana (Mouse-ear cress), this protein is Nudix hydrolase 20, chloroplastic (NUDT20).